Here is a 2409-residue protein sequence, read N- to C-terminus: Reducing polyketide synthase FUB1 (2409 aa).

Positions 1–43 are enriched in low complexity; that stretch reads MTLSNGSNGANGTSNGHGAHPSANGFHNAANGGANNGTPNGGA. Residues 1-49 form a disordered region; it reads MTLSNGSNGANGTSNGHGAHPSANGFHNAANGGANNGTPNGGAEYNASL. Residues 57 to 479 enclose the Ketosynthase family 3 (KS3) domain; that stretch reads SSAIAVIGVS…GANAHAVLDD (423 aa). Active-site for beta-ketoacyl synthase activity residues include C230, H365, and H403. The malonyl-CoA:ACP transacylase (MAT) domain stretch occupies residues 608 to 929; sequence TFIFTGQGAQ…FSAIKRKQDA (322 aa). Residue S699 is the For malonyltransferase activity of the active site. The interval 994–1127 is N-terminal hotdog fold; sequence LELLGVRDPR…GLVSTSYKRE (134 aa). In terms of domain architecture, PKS/mFAS DH spans 994–1307; the sequence is LELLGVRDPR…TVPLRGASDP (314 aa). A dehydratase (DH) domain region spans residues 995–1302; it reads ELLGVRDPRS…LEGCKTVPLR (308 aa). Catalysis depends on H1026, which acts as the Proton acceptor; for dehydratase activity. A C-terminal hotdog fold region spans residues 1155–1307; the sequence is LPSVDPTVFY…TVPLRGASDP (153 aa). The Proton donor; for dehydratase activity role is filled by D1220. The tract at residues 1713–2025 is enoyl reductase (ER) domain; the sequence is GLLDTLEYLS…SGGHVGKIVL (313 aa). The ketoreductase (KR) domain stretch occupies residues 2049 to 2225; it reads ATYVLIGGLG…AATSINLSLV (177 aa). The region spanning 2328–2405 is the Carrier domain; sequence EVYEIVLQQL…GFAKKVMAKS (78 aa). S2365 is modified (O-(pantetheine 4'-phosphoryl)serine).

The protein operates within mycotoxin biosynthesis. Reducing polyketide synthase; part of the gene cluster that mediates the biosynthesis of fusaric acid, a mycotoxin with low to moderate toxicity to animals and humans, but with high phytotoxic properties. L-aspartate is suggested as fusaric acid amino acid precursor that is activated and further processed to O-acetyl-L-homoserine by cluster enzymes aspartate kinase FUB3 and homoserine O-acetyltransferase FUB5, as well as enzymes of the primary metabolism. The polyketide synthase (PKS) FUB1 generates the triketide trans-2-hexenal which is presumptively released by the hydrolase FUB4 and linked to the NRPS-bound amino acid precursor by NAD(P)-dependent dehydrogenase FUB6. FUB1, FUB4, and the non-canonical NRPS Fub8 may form an enzyme complex. Further processing of the NRPS-bound intermediate might be carried out by FUB6 and the sulfhydrylase FUB7, enabling a spontaneous electrocyclization to close the carbon backbone of fusaric acid. Dihydrofusaric acid is likely to be released via reduction by the thioester reductase (TR) domain of FUB8 whereupon the final oxidation to fusaric acid may (also) be performed by the FMN-dependent dehydrogenase FUB9. This chain is Reducing polyketide synthase FUB1, found in Gibberella moniliformis (strain M3125 / FGSC 7600) (Maize ear and stalk rot fungus).